Here is a 380-residue protein sequence, read N- to C-terminus: Cytochrome b (380 aa).

4 helical membrane passes run 33–53, 77–98, 113–133, and 178–198; these read FGSLLGVCLMIQIMTGLFLAM, WLIRYLHANGASMFFICLFIHV, WNIGIILFLTTMATAFVGYVL, and FFAFHFILPFIITALVLVHLL. Heme b contacts are provided by histidine 83 and histidine 97. Positions 182 and 196 each coordinate heme b. Histidine 201 lines the a ubiquinone pocket. Transmembrane regions (helical) follow at residues 226–246, 288–308, 320–340, and 347–367; these read IKDLLGVLLLLMVLMILVLFF, LGGVLALILSILILAAFPFLN, ITQFLYWIFIANLLILTWIGG, and FTTIGQISSILYFTIIVVLMP.

The protein belongs to the cytochrome b family. In terms of assembly, the cytochrome bc1 complex contains 11 subunits: 3 respiratory subunits (MT-CYB, CYC1 and UQCRFS1), 2 core proteins (UQCRC1 and UQCRC2) and 6 low-molecular weight proteins (UQCRH/QCR6, UQCRB/QCR7, UQCRQ/QCR8, UQCR10/QCR9, UQCR11/QCR10 and a cleavage product of UQCRFS1). This cytochrome bc1 complex then forms a dimer. Heme b serves as cofactor.

The protein resides in the mitochondrion inner membrane. In terms of biological role, component of the ubiquinol-cytochrome c reductase complex (complex III or cytochrome b-c1 complex) that is part of the mitochondrial respiratory chain. The b-c1 complex mediates electron transfer from ubiquinol to cytochrome c. Contributes to the generation of a proton gradient across the mitochondrial membrane that is then used for ATP synthesis. The chain is Cytochrome b (MT-CYB) from Thomasomys ischyrus (Strong-tailed oldfield mouse).